The chain runs to 247 residues: 5-oxoprolinase subunit A 1 (247 aa).

It belongs to the LamB/PxpA family. In terms of assembly, forms a complex composed of PxpA, PxpB and PxpC.

It catalyses the reaction 5-oxo-L-proline + ATP + 2 H2O = L-glutamate + ADP + phosphate + H(+). Catalyzes the cleavage of 5-oxoproline to form L-glutamate coupled to the hydrolysis of ATP to ADP and inorganic phosphate. This chain is 5-oxoprolinase subunit A 1, found in Ralstonia nicotianae (strain ATCC BAA-1114 / GMI1000) (Ralstonia solanacearum).